The chain runs to 208 residues: Probable GTP-binding protein EngB (208 aa).

Positions 23–205 constitute an EngB-type G domain; it reads LTSEMVILGR…RQTLLKYLLT (183 aa). Residues 31 to 38, 57 to 61, 84 to 87, 154 to 157, and 182 to 184 contribute to the GTP site; these read GRSNVGKS, GKTRL, DLPG, TKFD, and FNA. Ser38 and Thr59 together coordinate Mg(2+).

This sequence belongs to the TRAFAC class TrmE-Era-EngA-EngB-Septin-like GTPase superfamily. EngB GTPase family. Requires Mg(2+) as cofactor.

In terms of biological role, necessary for normal cell division and for the maintenance of normal septation. The polypeptide is Probable GTP-binding protein EngB (Helicobacter pylori (strain HPAG1)).